Here is a 159-residue protein sequence, read N- to C-terminus: Ribosomal RNA large subunit methyltransferase H (159 aa).

S-adenosyl-L-methionine is bound by residues Leu-76, Gly-108, and 127–132 (FSKMTF).

The protein belongs to the RNA methyltransferase RlmH family. As to quaternary structure, homodimer.

The protein resides in the cytoplasm. It carries out the reaction pseudouridine(1915) in 23S rRNA + S-adenosyl-L-methionine = N(3)-methylpseudouridine(1915) in 23S rRNA + S-adenosyl-L-homocysteine + H(+). Functionally, specifically methylates the pseudouridine at position 1915 (m3Psi1915) in 23S rRNA. This Clostridium kluyveri (strain NBRC 12016) protein is Ribosomal RNA large subunit methyltransferase H.